Reading from the N-terminus, the 589-residue chain is Phenylalanine--tRNA ligase beta subunit (589 aa).

Residues 302 to 379 enclose the B5 domain; sequence LAYRKEMVRA…IAYGYSNIQM (78 aa). Mg(2+) is bound by residues aspartate 357, aspartate 363, glutamate 366, and aspartate 367.

The protein belongs to the phenylalanyl-tRNA synthetase beta subunit family. Type 2 subfamily. In terms of assembly, heterotetramer; dimer of two heterodimers formed by FARSA and FARSB. It depends on Mg(2+) as a cofactor.

The protein resides in the cytoplasm. The catalysed reaction is tRNA(Phe) + L-phenylalanine + ATP = L-phenylalanyl-tRNA(Phe) + AMP + diphosphate + H(+). In Pongo abelii (Sumatran orangutan), this protein is Phenylalanine--tRNA ligase beta subunit (FARSB).